Here is a 161-residue protein sequence, read N- to C-terminus: Small ribosomal subunit protein uS9 (161 aa).

Disordered regions lie at residues 1-27 (MAQI…APKA) and 142-161 (KERK…FSKR).

Belongs to the universal ribosomal protein uS9 family.

The chain is Small ribosomal subunit protein uS9 from Clavibacter michiganensis subsp. michiganensis (strain NCPPB 382).